Consider the following 224-residue polypeptide: Deoxyribose-phosphate aldolase (224 aa).

Catalysis depends on aspartate 92, which acts as the Proton donor/acceptor. Lysine 155 functions as the Schiff-base intermediate with acetaldehyde in the catalytic mechanism. Lysine 184 serves as the catalytic Proton donor/acceptor.

It belongs to the DeoC/FbaB aldolase family. DeoC type 1 subfamily.

It is found in the cytoplasm. The enzyme catalyses 2-deoxy-D-ribose 5-phosphate = D-glyceraldehyde 3-phosphate + acetaldehyde. It functions in the pathway carbohydrate degradation; 2-deoxy-D-ribose 1-phosphate degradation; D-glyceraldehyde 3-phosphate and acetaldehyde from 2-deoxy-alpha-D-ribose 1-phosphate: step 2/2. Functionally, catalyzes a reversible aldol reaction between acetaldehyde and D-glyceraldehyde 3-phosphate to generate 2-deoxy-D-ribose 5-phosphate. This Clostridium perfringens (strain ATCC 13124 / DSM 756 / JCM 1290 / NCIMB 6125 / NCTC 8237 / Type A) protein is Deoxyribose-phosphate aldolase.